The following is a 151-amino-acid chain: D-aminoacyl-tRNA deacylase (151 aa).

Residues 138–139 (GP) carry the Gly-cisPro motif, important for rejection of L-amino acids motif.

This sequence belongs to the DTD family. In terms of assembly, homodimer.

It is found in the cytoplasm. The enzyme catalyses glycyl-tRNA(Ala) + H2O = tRNA(Ala) + glycine + H(+). It carries out the reaction a D-aminoacyl-tRNA + H2O = a tRNA + a D-alpha-amino acid + H(+). In terms of biological role, an aminoacyl-tRNA editing enzyme that deacylates mischarged D-aminoacyl-tRNAs. Also deacylates mischarged glycyl-tRNA(Ala), protecting cells against glycine mischarging by AlaRS. Acts via tRNA-based rather than protein-based catalysis; rejects L-amino acids rather than detecting D-amino acids in the active site. By recycling D-aminoacyl-tRNA to D-amino acids and free tRNA molecules, this enzyme counteracts the toxicity associated with the formation of D-aminoacyl-tRNA entities in vivo and helps enforce protein L-homochirality. The chain is D-aminoacyl-tRNA deacylase from Magnetococcus marinus (strain ATCC BAA-1437 / JCM 17883 / MC-1).